The chain runs to 110 residues: Tyrosine-protein phosphatase 3 (110 aa).

The Tyrosine-protein phosphatase domain maps to 1-110 (QKCATIVMVT…NPPHSGPIVV (110 aa)). Asp-80 is a binding site for substrate.

The protein belongs to the protein-tyrosine phosphatase family.

It catalyses the reaction O-phospho-L-tyrosyl-[protein] + H2O = L-tyrosyl-[protein] + phosphate. This chain is Tyrosine-protein phosphatase 3 (STY-3), found in Styela plicata (Wrinkled sea squirt).